The chain runs to 656 residues: Threonine--tRNA ligase (656 aa).

The TGS domain maps to 2-67 (LMSQITIILP…KDQTKVALVT (66 aa)). The interval 251 to 542 (DHRKLGKELG…YLEHTAGHLP (292 aa)) is catalytic. Zn(2+) is bound by residues Cys-342, His-393, and His-519.

The protein belongs to the class-II aminoacyl-tRNA synthetase family. In terms of assembly, homodimer. The cofactor is Zn(2+).

Its subcellular location is the cytoplasm. It catalyses the reaction tRNA(Thr) + L-threonine + ATP = L-threonyl-tRNA(Thr) + AMP + diphosphate + H(+). Catalyzes the attachment of threonine to tRNA(Thr) in a two-step reaction: L-threonine is first activated by ATP to form Thr-AMP and then transferred to the acceptor end of tRNA(Thr). Also edits incorrectly charged L-seryl-tRNA(Thr). This Bdellovibrio bacteriovorus (strain ATCC 15356 / DSM 50701 / NCIMB 9529 / HD100) protein is Threonine--tRNA ligase.